A 363-amino-acid polypeptide reads, in one-letter code: Teichoic acids export ATP-binding protein TagH (363 aa).

The region spanning 27-246 is the ABC transporter domain; that stretch reads KHFFNIGNVD…YRKFSKDFKA (220 aa). 60-67 is a binding site for ATP; it reads GINGSGKS. The segment at 247 to 363 is unknown; the sequence is QTAAYRKKYQ…KSQSVLFNSK (117 aa).

This sequence belongs to the ABC transporter superfamily. Teichoic acids exporter (TC 3.A.1.104.1) family. The complex is composed of two ATP-binding proteins (TagH) and two transmembrane proteins (TagG).

It localises to the cell membrane. The enzyme catalyses ATP + H2O + teichoic acidSide 1 = ADP + phosphate + teichoic acidSide 2.. Its function is as follows. Part of the ABC transporter complex TagGH involved in teichoic acids export. Responsible for energy coupling to the transport system. In Lactiplantibacillus plantarum (strain ATCC BAA-793 / NCIMB 8826 / WCFS1) (Lactobacillus plantarum), this protein is Teichoic acids export ATP-binding protein TagH.